The following is a 288-amino-acid chain: MKIYLNGKFVDEKDAKVSVFDHGLLYGDGVFEGIRAYDGVVFMLKEHIDRLYDSAKSLCIDIPLTKEEMIDVVLETLRVNNLRDAYIRLVVTRGVGDLGLDPRKCGKPTIFCIAIPMPPLLGEDGIRAITVSVRRLPVDVLNPAVKSLNYLNSVLAKIQANYAGVDEAFLLDDKGFVVEGTGDNIFIVKNGVLKTPPVYQSILKGITRDVVIKLAKEEGIEVVEEPLTLHDLYTADELFITGTAAEIVPVFEIDGRVINNKQVGEITKKLKEKFKDIRTKWGIKVYDE.

Lys146 carries the N6-(pyridoxal phosphate)lysine modification.

It belongs to the class-IV pyridoxal-phosphate-dependent aminotransferase family. It depends on pyridoxal 5'-phosphate as a cofactor.

It carries out the reaction L-leucine + 2-oxoglutarate = 4-methyl-2-oxopentanoate + L-glutamate. It catalyses the reaction L-isoleucine + 2-oxoglutarate = (S)-3-methyl-2-oxopentanoate + L-glutamate. The enzyme catalyses L-valine + 2-oxoglutarate = 3-methyl-2-oxobutanoate + L-glutamate. It participates in amino-acid biosynthesis; L-isoleucine biosynthesis; L-isoleucine from 2-oxobutanoate: step 4/4. It functions in the pathway amino-acid biosynthesis; L-leucine biosynthesis; L-leucine from 3-methyl-2-oxobutanoate: step 4/4. Its pathway is amino-acid biosynthesis; L-valine biosynthesis; L-valine from pyruvate: step 4/4. Functionally, acts on leucine, isoleucine and valine. This Methanocaldococcus jannaschii (strain ATCC 43067 / DSM 2661 / JAL-1 / JCM 10045 / NBRC 100440) (Methanococcus jannaschii) protein is Putative branched-chain-amino-acid aminotransferase (ilvE).